A 205-amino-acid polypeptide reads, in one-letter code: Transcriptional regulator GfcR (205 aa).

Belongs to the purine/pyrimidine phosphoribosyltransferase family. GfcR subfamily.

The chain is Transcriptional regulator GfcR from Methanococcus maripaludis (strain C7 / ATCC BAA-1331).